The chain runs to 535 residues: Growth-regulating factor 2 (535 aa).

The QLQ domain occupies 164 to 199; the sequence is PFTLTQWAELEQQALIYKYITANVPVPSSLLISIKK. The region spanning 227-271 is the WRC domain; the sequence is DPEPGRCRRTDGKKWRCSRDAVPDQKYCERHINRGRHRSRKPVEV. Short sequence motifs (bipartite nuclear localization signal) lie at residues 232-242 and 260-267; these read RCRRTDGKKWR and RGRHRSRK. Disordered stretches follow at residues 260 to 308, 417 to 437, and 514 to 535; these read RGRH…ASSN, PIASSSPSSTHNNNNAQEKTT, and SSVSSPIAENNRHNGDYFHYTT. Residues 272 to 291 are compositionally biased toward polar residues; it reads QSGQNQTAAAASKAVTTPQQ. Residues 299-308 show a composition bias toward low complexity; the sequence is NRSNARASSN. Residues 426 to 437 are compositionally biased toward polar residues; sequence THNNNNAQEKTT.

Belongs to the GRF family. Interacts with GIF1. As to expression, strongly expressed in actively growing and developing tissues, such as roots, upper stems, and shoot tips containing the shoot apical meristem (SAM) and flower buds. Detected in young leaf primordium. Also expressed in mature flowers, but weakly expressed in mature stems and leaves.

The protein resides in the nucleus. Its function is as follows. Transcription activator that plays a role in the regulation of cell expansion in leaf and cotyledons tissues. Component of a network formed by miR396, the GRFs and their interacting factors (GIFs) acting in the regulation of meristem function, at least partially through the control of cell proliferation. The chain is Growth-regulating factor 2 (GRF2) from Arabidopsis thaliana (Mouse-ear cress).